Here is a 703-residue protein sequence, read N- to C-terminus: Probable ATP-dependent RNA helicase vasa-like (703 aa).

3 disordered regions span residues 1 to 22 (MSDD…ESFG), 35 to 73 (NTGN…GRGG), and 88 to 167 (RDCP…RGCF). Gly residues predominate over residues 61–73 (SGGGGFGGRGRGG). A CCHC-type 1 zinc finger spans residues 77-92 (CFKCGDEGHMARDCPS). Over residues 146 to 155 (FGFGSGSGSR) the composition is skewed to gly residues. 2 consecutive CCHC-type zinc fingers follow at residues 166–181 (CFKC…DCPS) and 189–204 (CFKC…DCPN). The Q motif motif lies at 261-289 (ESFQSMNLRPLLLENIVKAGYGCPTPVQK). The region spanning 292–475 (IPNVMNGRDI…SAFLNNYLFV (184 aa)) is the Helicase ATP-binding domain. ATP is bound at residue 305–312 (AQTGSGKT). Positions 419–422 (DEAD) match the DEAD box motif. Positions 506–651 (MCEEILISAD…TIPDWLTQKA (146 aa)) constitute a Helicase C-terminal domain. Positions 676–703 (GGGRGWEKNQASSFLGGPSESNVDEEWD) are disordered.

Belongs to the DEAD box helicase family. DDX4/VASA subfamily. Expressed in ovaries and testis. Not expressed in somatic tissue of the ovaries including follicle cells, muscle and connective tissue.

Its subcellular location is the cytoplasm. The protein localises to the nucleus. It localises to the nucleolus. It carries out the reaction ATP + H2O = ADP + phosphate + H(+). Its function is as follows. Involved in translational control mechanisms operating in early stages of oogenesis. Required maternally in many stages of oogenesis, including cystocyte differentiation, oocyte differentiation, and specification of anterior-posterior polarity in the developing cysts. Essential for the formation and/or structural integrity of perinuclear nuage particles during germ cell formation. The chain is Probable ATP-dependent RNA helicase vasa-like from Penaeus vannamei (Whiteleg shrimp).